Reading from the N-terminus, the 163-residue chain is Endoribonuclease YbeY (163 aa).

Zn(2+)-binding residues include His-119, His-123, and His-129.

The protein belongs to the endoribonuclease YbeY family. Requires Zn(2+) as cofactor.

It is found in the cytoplasm. Its function is as follows. Single strand-specific metallo-endoribonuclease involved in late-stage 70S ribosome quality control and in maturation of the 3' terminus of the 16S rRNA. This chain is Endoribonuclease YbeY, found in Actinobacillus pleuropneumoniae serotype 5b (strain L20).